Consider the following 152-residue polypeptide: Probable flagellum biosynthesis repressor protein FlbT (152 aa).

It belongs to the FlbT family.

Has a post-transcriptional repressor function in flagellum biogenesis. Associates with the 5'-UTR of fljK mRNA and promotes its degradation. This chain is Probable flagellum biosynthesis repressor protein FlbT, found in Brucella anthropi (strain ATCC 49188 / DSM 6882 / CCUG 24695 / JCM 21032 / LMG 3331 / NBRC 15819 / NCTC 12168 / Alc 37) (Ochrobactrum anthropi).